The following is a 338-amino-acid chain: Anthranilate phosphoribosyltransferase (338 aa).

5-phospho-alpha-D-ribose 1-diphosphate-binding positions include glycine 82, 85 to 86, threonine 90, 92 to 95, 110 to 118, and serine 122; these read GD, NIST, and KHGNRAASS. Residue glycine 82 participates in anthranilate binding. Serine 94 contributes to the Mg(2+) binding site. Asparagine 113 is an anthranilate binding site. An anthranilate-binding site is contributed by arginine 168. The Mg(2+) site is built by aspartate 226 and glutamate 227.

The protein belongs to the anthranilate phosphoribosyltransferase family. In terms of assembly, homodimer. Mg(2+) serves as cofactor.

The enzyme catalyses N-(5-phospho-beta-D-ribosyl)anthranilate + diphosphate = 5-phospho-alpha-D-ribose 1-diphosphate + anthranilate. It participates in amino-acid biosynthesis; L-tryptophan biosynthesis; L-tryptophan from chorismate: step 2/5. Catalyzes the transfer of the phosphoribosyl group of 5-phosphorylribose-1-pyrophosphate (PRPP) to anthranilate to yield N-(5'-phosphoribosyl)-anthranilate (PRA). This Deinococcus radiodurans (strain ATCC 13939 / DSM 20539 / JCM 16871 / CCUG 27074 / LMG 4051 / NBRC 15346 / NCIMB 9279 / VKM B-1422 / R1) protein is Anthranilate phosphoribosyltransferase.